The sequence spans 591 residues: MMRSHYCGQLNESLDGQEITLCGWVHRRRDHGGVIFLDIRDREGLAQVVFDPDRAETFAKADRVRSEYVVKITGKVRLRPAGAVNPNMASGAIEVLGYELDVLNEAETPPFPLNEYTDVGEETRLRYRFIDLRRPEMAEKLKLRSRITSSIRRYLDDNGFLDVETPILTRATPEGARDYLVPSRTHAGSFFALPQSPQLFKQLLMVAGFDRYYQIAKCFRDEDLRADRQPEFTQIDIETSFLDEKDIMDITETMVRNLFKEVLGVEFGELPHMPLAEAMRRFGSDKPDLRIPLELVDVEDQLKDVEFKVFAGPANDPKCRVTALRVPGGASMPRKQIDDYTKFVGIYGAKGLAYIKVNERAAGVDGLQSPIVKNIPLDNINVILDRVGAVDGDIVFFGADKAKIVSEALGALRIKLGHDLNLLTCEWAPLWVVDFPMFEENDDGSLTAMHHPFTSPKCTPEDLEANPAAALSRAYDMVLNGTELGGGSIRIHDKAMQQTVFRVLGISEDEQQEKFGFLLDALKYGAPPHGGLAFGLDRLVMLMTGASSIREVIAFPKTQSAACVMTQAPGVVDAKSLRELHIRLREQAKAE.

Glu-174 contributes to the L-aspartate binding site. An aspartate region spans residues 198-201 (QLFK). Arg-220 provides a ligand contact to L-aspartate. ATP contacts are provided by residues 220-222 (RDE) and Gln-229. Residue His-450 coordinates L-aspartate. ATP is bound at residue Glu-483. Residue Arg-490 coordinates L-aspartate. 535 to 538 (GLDR) lines the ATP pocket.

Belongs to the class-II aminoacyl-tRNA synthetase family. Type 1 subfamily. Homodimer.

It localises to the cytoplasm. The enzyme catalyses tRNA(Asx) + L-aspartate + ATP = L-aspartyl-tRNA(Asx) + AMP + diphosphate. Aspartyl-tRNA synthetase with relaxed tRNA specificity since it is able to aspartylate not only its cognate tRNA(Asp) but also tRNA(Asn). Reaction proceeds in two steps: L-aspartate is first activated by ATP to form Asp-AMP and then transferred to the acceptor end of tRNA(Asp/Asn). The chain is Aspartate--tRNA(Asp/Asn) ligase from Ectopseudomonas mendocina (strain ymp) (Pseudomonas mendocina).